A 478-amino-acid chain; its full sequence is Cytochrome c-552 (478 aa).

An N-terminal signal peptide occupies residues 1-27 (MKKQWTRRSAAAIAMVTTLLLSSHSFA). Residue His91 coordinates heme c. Heme is bound by residues Cys119, Cys122, and Lys123. Heme c contacts are provided by Cys157, Cys160, His161, Cys206, Cys209, and His210. Glu212, Tyr213, Lys258, and Gln260 together coordinate Ca(2+). Residue Tyr213 coordinates substrate. His261 serves as a coordination point for substrate. Positions 272, 279, 282, 283, 298, 311, 314, 315, and 390 each coordinate heme c.

Belongs to the cytochrome c-552 family. Requires Ca(2+) as cofactor. Heme c is required as a cofactor.

The protein resides in the periplasm. The catalysed reaction is 6 Fe(III)-[cytochrome c] + NH4(+) + 2 H2O = 6 Fe(II)-[cytochrome c] + nitrite + 8 H(+). The protein operates within nitrogen metabolism; nitrate reduction (assimilation). In terms of biological role, catalyzes the reduction of nitrite to ammonia, consuming six electrons in the process. This Aliivibrio fischeri (strain ATCC 700601 / ES114) (Vibrio fischeri) protein is Cytochrome c-552.